A 183-amino-acid polypeptide reads, in one-letter code: GMP synthase [glutamine-hydrolyzing] subunit A (183 aa).

In terms of domain architecture, Glutamine amidotransferase type-1 spans 2–183 (KIYVIYNYGQ…YRNFIEICKK (182 aa)). Cys74 functions as the Nucleophile in the catalytic mechanism. Residues His161 and Glu163 contribute to the active site.

As to quaternary structure, heterodimer composed of a glutamine amidotransferase subunit (A) and a GMP-binding subunit (B).

It catalyses the reaction XMP + L-glutamine + ATP + H2O = GMP + L-glutamate + AMP + diphosphate + 2 H(+). Its pathway is purine metabolism; GMP biosynthesis; GMP from XMP (L-Gln route): step 1/1. Functionally, catalyzes the synthesis of GMP from XMP. The polypeptide is GMP synthase [glutamine-hydrolyzing] subunit A (Archaeoglobus fulgidus (strain ATCC 49558 / DSM 4304 / JCM 9628 / NBRC 100126 / VC-16)).